The chain runs to 473 residues: Dol-P-Glc:Glc(2)Man(9)GlcNAc(2)-PP-Dol alpha-1,2-glucosyltransferase (473 aa).

Over 1–6 the chain is Cytoplasmic; it reads MAQLEG. The chain crosses the membrane as a helical span at residues 7 to 27; sequence YYFSAALSCTFLVSCLLFSAF. Over 28–64 the chain is Extracellular; the sequence is SRALREPYMDEIFHLPQAQRYCEGHFSLSQWDPMITT. A helical membrane pass occupies residues 65–85; sequence LPGLYLVSIGVIKPAIWIFGW. Residues 86–97 are Cytoplasmic-facing; it reads SEHVVCSIGMLR. Residues 98–118 form a helical membrane-spanning segment; the sequence is FVNLLFSVGNFYLLYLLFCKV. Residues 119–130 are Extracellular-facing; it reads QPRNKAASSIQR. 2 helical membrane-spanning segments follow: residues 131–151 and 152–172; these read VLST…FLYY and TEAG…YGNH. Residues 173-175 are Extracellular-facing; the sequence is KTS. Residues 176–196 traverse the membrane as a helical segment; the sequence is AFLGFCGFMFRQTNIIWAVFC. The Cytoplasmic segment spans residues 197–249; it reads AGNVIAQKLTEAWKTELQKKEDRLPPIKGPFAEFRKILQFLLAYSMSFKNLSM. Residues 250-270 form a helical membrane-spanning segment; it reads LLLLTWPYILLGFLFCAFVVV. Over 271–283 the chain is Extracellular; sequence NGGIVIGDRSSHE. Residues 284 to 304 form a helical membrane-spanning segment; it reads ACLHFPQLFYFFSFTLFFSFP. The Cytoplasmic segment spans residues 305–323; sequence HLLSPSKIKTFLSLVWKRR. The helical transmembrane segment at 324–344 threads the bilayer; that stretch reads ILFFVVTLVSVFLVWKFTYAH. Over 345 to 367 the chain is Extracellular; it reads KYLLADNRHYTFYVWKRVFQRYE. A helical transmembrane segment spans residues 368-388; sequence TVKYLLVPAYIFAGWSIADSL. Residues 389–392 lie on the Cytoplasmic side of the membrane; it reads KSKS. The chain crosses the membrane as a helical span at residues 393–413; the sequence is IFWNLMFFICLFTVIVPQKLL. Residues 414 to 436 are Extracellular-facing; it reads EFRYFILPYVIYRLNIPLPPTSR. The helical transmembrane segment at 437–457 threads the bilayer; it reads LICELSCYAVVNFITFFIFLN. Residues 458-473 are Cytoplasmic-facing; that stretch reads KTFQWPNSQDIQRFMW.

This sequence belongs to the ALG10 glucosyltransferase family.

It localises to the endoplasmic reticulum membrane. It catalyses the reaction an alpha-D-Glc-(1-&gt;3)-alpha-D-Glc-(1-&gt;3)-alpha-D-Man-(1-&gt;2)-alpha-D-Man-(1-&gt;2)-alpha-D-Man-(1-&gt;3)-[alpha-D-Man-(1-&gt;2)-alpha-D-Man-(1-&gt;3)-[alpha-D-Man-(1-&gt;2)-alpha-D-Man-(1-&gt;6)]-alpha-D-Man-(1-&gt;6)]-beta-D-Man-(1-&gt;4)-beta-D-GlcNAc-(1-&gt;4)-alpha-D-GlcNAc-diphospho-di-trans,poly-cis-dolichol + a di-trans,poly-cis-dolichyl beta-D-glucosyl phosphate = a alpha-D-Glc-(1-&gt;2)-alpha-D-Glc-(1-&gt;3)-alpha-D-Glc-(1-&gt;3)-alpha-D-Man-(1-&gt;2)-alpha-D-Man-(1-&gt;2)-alpha-D-Man-(1-&gt;3)-[alpha-D-Man-(1-&gt;2)-alpha-D-Man-(1-&gt;3)-[alpha-D-Man-(1-&gt;2)-alpha-D-Man-(1-&gt;6)]-alpha-D-Man-(1-&gt;6)]-beta-D-Man-(1-&gt;4)-beta-D-GlcNAc-(1-&gt;4)-alpha-D-GlcNAc-diphospho-di-trans,poly-cis-dolichol + a di-trans,poly-cis-dolichyl phosphate + H(+). Its pathway is protein modification; protein glycosylation. Functionally, dol-P-Glc:Glc(2)Man(9)GlcNAc(2)-PP-Dol alpha-1,2-glucosyltransferase that operates in the biosynthetic pathway of dolichol-linked oligosaccharides, the glycan precursors employed in protein asparagine (N)-glycosylation. The assembly of dolichol-linked oligosaccharides begins on the cytosolic side of the endoplasmic reticulum membrane and finishes in its lumen. The sequential addition of sugars to dolichol pyrophosphate produces dolichol-linked oligosaccharides containing fourteen sugars, including two GlcNAcs, nine mannoses and three glucoses. Once assembled, the oligosaccharide is transferred from the lipid to nascent proteins by oligosaccharyltransferases. In the lumen of the endoplasmic reticulum, adds the third and last glucose residue from dolichyl phosphate glucose (Dol-P-Glc) onto the lipid-linked oligosaccharide intermediate Glc(2)Man(9)GlcNAc(2)-PP-Dol to produce Glc(3)Man(9)GlcNAc(2)-PP-Dol. This Homo sapiens (Human) protein is Dol-P-Glc:Glc(2)Man(9)GlcNAc(2)-PP-Dol alpha-1,2-glucosyltransferase.